We begin with the raw amino-acid sequence, 258 residues long: Snake venom serine protease 3 (258 aa).

The first 18 residues, 1-18, serve as a signal peptide directing secretion; the sequence is MVLIRVLANLLILQLSYA. The propeptide occupies 19–24; that stretch reads QKSSEL. Positions 25 to 249 constitute a Peptidase S1 domain; sequence VIGGDECNIN…YTDWIQSIIA (225 aa). Cystine bridges form between Cys-31-Cys-163, Cys-50-Cys-66, Cys-98-Cys-256, Cys-142-Cys-210, Cys-174-Cys-189, and Cys-200-Cys-225. Asn-44 is a glycosylation site (N-linked (GlcNAc...) asparagine). Residue His-65 is the Charge relay system of the active site. N-linked (GlcNAc...) asparagine glycosylation occurs at Asn-103. Asp-110 functions as the Charge relay system in the catalytic mechanism. 3 N-linked (GlcNAc...) asparagine glycosylation sites follow: Asn-117, Asn-121, and Asn-154. Residue Ser-204 is the Charge relay system of the active site. Asn-251 is a glycosylation site (N-linked (GlcNAc...) asparagine).

The protein belongs to the peptidase S1 family. Snake venom subfamily. As to quaternary structure, monomer. In terms of tissue distribution, expressed by the venom gland.

The protein resides in the secreted. Functionally, snake venom serine protease that may act in the hemostasis system of the prey. The chain is Snake venom serine protease 3 (TLG3) from Craspedocephalus gramineus (Bamboo pit viper).